Here is a 126-residue protein sequence, read N- to C-terminus: Large ribosomal subunit protein eL18 (126 aa).

The protein belongs to the eukaryotic ribosomal protein eL18 family.

This Methanosarcina acetivorans (strain ATCC 35395 / DSM 2834 / JCM 12185 / C2A) protein is Large ribosomal subunit protein eL18.